Consider the following 231-residue polypeptide: Large ribosomal subunit protein uL1 (231 aa).

Belongs to the universal ribosomal protein uL1 family. In terms of assembly, part of the 50S ribosomal subunit.

Binds directly to 23S rRNA. The L1 stalk is quite mobile in the ribosome, and is involved in E site tRNA release. In terms of biological role, protein L1 is also a translational repressor protein, it controls the translation of the L11 operon by binding to its mRNA. This chain is Large ribosomal subunit protein uL1, found in Acetivibrio thermocellus (strain ATCC 27405 / DSM 1237 / JCM 9322 / NBRC 103400 / NCIMB 10682 / NRRL B-4536 / VPI 7372) (Clostridium thermocellum).